A 227-amino-acid polypeptide reads, in one-letter code: H-2 class II histocompatibility antigen, A-U alpha chain (227 aa).

The interval 1 to 82 is alpha-1; sequence DHVGSYGIVV…KRSNSTPATN (82 aa). The Extracellular portion of the chain corresponds to 1-189; it reads DHVGSYGIVV…IPAPMSELTE (189 aa). Residues 83–176 form an alpha-2 region; that stretch reads EAPQATVFPK…GLEEPVLKHW (94 aa). Residues 85–177 form the Ig-like C1-type domain; sequence PQATVFPKSP…LEEPVLKHWE (93 aa). C105 and C161 are oxidised to a cystine. N116 is a glycosylation site (N-linked (GlcNAc...) asparagine). A connecting peptide region spans residues 177-189; it reads EPEIPAPMSELTE. A helical transmembrane segment spans residues 190–215; it reads TVVCALGLSVGLVGIVVGTIFIIQGL. At 216 to 227 the chain is on the cytoplasmic side; the sequence is RSGGTSRHPGPL.

It belongs to the MHC class II family.

It is found in the membrane. This Mus musculus (Mouse) protein is H-2 class II histocompatibility antigen, A-U alpha chain (H2-Aa).